Reading from the N-terminus, the 114-residue chain is Large ribosomal subunit protein bL20 (114 aa).

It belongs to the bacterial ribosomal protein bL20 family.

Its function is as follows. Binds directly to 23S ribosomal RNA and is necessary for the in vitro assembly process of the 50S ribosomal subunit. It is not involved in the protein synthesizing functions of that subunit. This Flavobacterium psychrophilum (strain ATCC 49511 / DSM 21280 / CIP 103535 / JIP02/86) protein is Large ribosomal subunit protein bL20.